A 1510-amino-acid polypeptide reads, in one-letter code: Chromosome partition protein MukB (1510 aa).

75-82 (GGNGAGKS) is a binding site for ATP. Residues 346–706 (QHRLVDLSRE…LDEQISRLSQ (361 aa)) adopt a coiled-coil conformation. Residues 707 to 824 (PDGSEDPRLN…EIPLFGCAAR (118 aa)) are flexible hinge. 2 coiled-coil regions span residues 825-1154 (EKRL…AAKV) and 1248-1304 (IDAI…LQNI).

It belongs to the SMC family. MukB subfamily. In terms of assembly, homodimerization via its hinge domain. Binds to DNA via its C-terminal region. Interacts, and probably forms a ternary complex, with MukE and MukF via its C-terminal region. The complex formation is stimulated by calcium or magnesium. Interacts with tubulin-related protein FtsZ.

It localises to the cytoplasm. It is found in the nucleoid. Functionally, plays a central role in chromosome condensation, segregation and cell cycle progression. Functions as a homodimer, which is essential for chromosome partition. Involved in negative DNA supercoiling in vivo, and by this means organize and compact chromosomes. May achieve or facilitate chromosome segregation by condensation DNA from both sides of a centrally located replisome during cell division. The protein is Chromosome partition protein MukB of Haemophilus influenzae (strain ATCC 51907 / DSM 11121 / KW20 / Rd).